Here is a 730-residue protein sequence, read N- to C-terminus: Polyphosphate kinase (730 aa).

A compositionally biased stretch (basic and acidic residues) spans 1-21 (MMRHDRNVTEIDAETRPDENL). The disordered stretch occupies residues 1-39 (MMRHDRNVTEIDAETRPDENLWHSGDSAVGAPPAATPAA). Asn-86 contributes to the ATP binding site. Positions 423 and 453 each coordinate Mg(2+). The Phosphohistidine intermediate role is filled by His-483. Residues Tyr-516, Arg-612, and His-640 each contribute to the ATP site.

Belongs to the polyphosphate kinase 1 (PPK1) family. Mg(2+) is required as a cofactor. An intermediate of this reaction is the autophosphorylated ppk in which a phosphate is covalently linked to a histidine residue through a N-P bond.

It catalyses the reaction [phosphate](n) + ATP = [phosphate](n+1) + ADP. In terms of biological role, catalyzes the reversible transfer of the terminal phosphate of ATP to form a long-chain polyphosphate (polyP). The polypeptide is Polyphosphate kinase (Mycolicibacterium paratuberculosis (strain ATCC BAA-968 / K-10) (Mycobacterium paratuberculosis)).